The primary structure comprises 347 residues: Haptoglobin (347 aa).

Residues 1-18 form the signal peptide; the sequence is MSDLGAVVALLLWGQLFA. The Sushi domain maps to 31-88; that stretch reads DGCPKPPMIANGYVEHLVRYQCKNYYRLRTEGDGVYTLNNEKQWTNKAVGDKLPECEA. 2 disulfide bridges follow: C52–C86 and C90–C207. The tract at residues 103-347 is serine protease; the sequence is ILGGHLDAKG…DWVQKTIAEN (245 aa). 5 N-linked (GlcNAc...) asparagine glycosylation sites follow: N125, N148, N152, N182, and N232. Cystine bridges form between C250-C281 and C292-C322. Positions 259–264 are interaction with CD163; it reads VPEKKT.

The protein belongs to the peptidase S1 family. Tetramer of two alpha and two beta chains; disulfide-linked. The hemoglobin/haptoglobin complex is composed of a haptoglobin dimer bound to two hemoglobin alpha-beta dimers. Interacts with CD163. Interacts with ERGIC3. As to expression, expressed by the liver and secreted in plasma.

It is found in the secreted. Functionally, as a result of hemolysis, hemoglobin is found to accumulate in the kidney and is secreted in the urine. Haptoglobin captures, and combines with free plasma hemoglobin to allow hepatic recycling of heme iron and to prevent kidney damage. Haptoglobin also acts as an antioxidant, has antibacterial activity and plays a role in modulating many aspects of the acute phase response. Hemoglobin/haptoglobin complexes are rapidly cleared by the macrophage CD163 scavenger receptor expressed on the surface of liver Kupfer cells through an endocytic lysosomal degradation pathway. This Papio hamadryas (Hamadryas baboon) protein is Haptoglobin (HP).